The sequence spans 1265 residues: Kinesin-like protein Klp98A (1265 aa).

Residues 3–364 (SLKVAVRVRP…LRYANRAKNI (362 aa)) form the Kinesin motor domain. 100-107 (GQTGSGKT) contributes to the ATP binding site. Disordered regions lie at residues 597–621 (GASP…DPEL), 828–864 (EAES…DVSK), and 884–954 (VSSP…CTPS). Coiled coils occupy residues 619–670 (PELQ…EEMD) and 768–848 (AQFI…LGNK). 3 stretches are compositionally biased toward polar residues: residues 846–857 (GNKSMSTSTSTN), 884–901 (VSSP…SNCS), and 917–927 (SGSSEETSRTC). Residues 933 to 946 (SGSGSGSVGIGGSG) are compositionally biased toward gly residues. A coiled-coil region spans residues 1035–1071 (DLNKAQLDEHIADLQDLQRRYIQMEQEMLQSVQDLEA). The PX domain occupies 1129 to 1259 (GEHFITIPSF…SFFKKGLFEN (131 aa)).

The protein belongs to the TRAFAC class myosin-kinesin ATPase superfamily. Kinesin family. Interacts with Atg8a and Rab14.

The protein localises to the early endosome. In terms of biological role, plus end-directed motor protein involved in asymmetric cell division of sensory organ precursor (SOP) cells by playing a role in the asymmetric localization of Sara-expressing endosomes to the pIIa daughter cell but not to the pIIb cell. Targets Sara-expressing endosomes to the central spindle which is symmetrically arranged in early cell division. During late cytokinesis, central spindle asymmetry is generated by enrichment of Patronin on the pIIb side which protects microtubules from depolymerization by Klp10A while unprotected microtubules on the pIIa side are disassembled by Klp10A, leading to the asymmetric delivery of Sara-expressing endosomes to the pIIa daughter cell. Also plays a role in regulation of autophagosome formation, fusion and positioning and is required for normal localization of Rab14. This is Kinesin-like protein Klp98A from Drosophila melanogaster (Fruit fly).